Reading from the N-terminus, the 399-residue chain is Acetate kinase (399 aa).

Asparagine 9 serves as a coordination point for Mg(2+). Lysine 16 contributes to the ATP binding site. Arginine 90 serves as a coordination point for substrate. The active-site Proton donor/acceptor is the aspartate 147. ATP is bound by residues 207–211, 282–284, and 330–334; these read HIGNG, DLR, and GVGEN. A Mg(2+)-binding site is contributed by glutamate 384.

The protein belongs to the acetokinase family. As to quaternary structure, homodimer. The cofactor is Mg(2+). Mn(2+) is required as a cofactor.

The protein resides in the cytoplasm. The enzyme catalyses acetate + ATP = acetyl phosphate + ADP. Its pathway is metabolic intermediate biosynthesis; acetyl-CoA biosynthesis; acetyl-CoA from acetate: step 1/2. In terms of biological role, catalyzes the formation of acetyl phosphate from acetate and ATP. Can also catalyze the reverse reaction. This is Acetate kinase from Staphylococcus saprophyticus subsp. saprophyticus (strain ATCC 15305 / DSM 20229 / NCIMB 8711 / NCTC 7292 / S-41).